The chain runs to 76 residues: MANRPLFKRKKFCRFTAEGIKHIDYKDIDLLKDFVSENGRIIPARITGTRAYYQRQLNLAIERARFLALLPYTDQH.

This sequence belongs to the bacterial ribosomal protein bS18 family. In terms of assembly, part of the 30S ribosomal subunit. Forms a tight heterodimer with protein bS6.

In terms of biological role, binds as a heterodimer with protein bS6 to the central domain of the 16S rRNA, where it helps stabilize the platform of the 30S subunit. This Nitrosomonas europaea (strain ATCC 19718 / CIP 103999 / KCTC 2705 / NBRC 14298) protein is Small ribosomal subunit protein bS18.